The primary structure comprises 90 residues: Large ribosomal subunit protein eL34 (90 aa).

Residues 38–65 form a disordered region; sequence ARCGRPLGGVPRGRPPRVRRLSKTAKRP. The segment covering 51-62 has biased composition (basic residues); it reads RPPRVRRLSKTA.

Belongs to the eukaryotic ribosomal protein eL34 family.

The protein is Large ribosomal subunit protein eL34 (rpl34e) of Aeropyrum pernix (strain ATCC 700893 / DSM 11879 / JCM 9820 / NBRC 100138 / K1).